The chain runs to 383 residues: Proton extrusion protein PxcA (383 aa).

The next 4 helical transmembrane spans lie at 163–183 (ILLL…AYII), 258–278 (AVKN…VCFA), 306–326 (IILF…TVLL), and 341–361 (FVML…KYWI).

It belongs to the CemA family.

It localises to the cell inner membrane. Functionally, required for H(+) efflux immediately after light irradiation to form a rapid H(+) concentration gradient across the thylakoid membranes. Together with PxcL, contributes to transient H(+) uptake following dark to light transition. The sequence is that of Proton extrusion protein PxcA from Synechococcus sp. (strain CC9902).